Here is a 381-residue protein sequence, read N- to C-terminus: Tumor necrosis factor receptor superfamily member 10B (381 aa).

The signal sequence occupies residues 1-52; the sequence is MEPPGPSTPTASAAARADHYTPGLRPLPKRRLLYSFALLLAVLQAVFVPVTA. 3 TNFR-Cys repeats span residues 26–86, 87–129, and 130–169; these read PLPK…GNCK, PCRE…NTVC, and RCKP…NRKC. Over 53–180 the chain is Extracellular; that stretch reads NPAHNRPAGL…SKTAWASWHK (128 aa). 7 disulfide bridges follow: Cys-74–Cys-85, Cys-88–Cys-105, Cys-108–Cys-121, Cys-111–Cys-129, Cys-131–Cys-145, Cys-148–Cys-161, and Cys-151–Cys-169. The helical transmembrane segment at 181–201 threads the bilayer; it reads LGLWIGLLVPVVLLIGALLVW. The Cytoplasmic portion of the chain corresponds to 202–381; it reads KTGAWRQWLL…ETGPGGSQCV (180 aa). A disordered region spans residues 228-260; the sequence is HSSLLDRQTSSTTNDSNHNTEPGKTQKTGKKLL. Over residues 236–247 the composition is skewed to low complexity; that stretch reads TSSTTNDSNHNT. A Death domain is found at 273–356; it reads KFIFEYCSDI…DAMEKIEDYA (84 aa). Arg-293 carries a (Microbial infection) N-beta-linked (GlcNAc) arginine glycan.

Monomer. Can interact with TRADD and RIPK1. Three TNFRSF10B molecules interact with the TNFSF10 homotrimer. In the absence of stimulation, interacts with BIRC2, DDX3X and GSK3B. The interaction with BIRC2 and DDX3X is further enhanced upon receptor stimulation and accompanied by DDX3X and BIRC2 cleavage. (Microbial infection) Glycosylated at Arg-293 by S.typhimurium protein Ssek3. Highly expressed in heart, lung and kidney.

Its subcellular location is the membrane. Its function is as follows. Receptor for the cytotoxic ligand TNFSF10/TRAIL. The adapter molecule FADD recruits caspase-8 to the activated receptor. The resulting death-inducing signaling complex (DISC) performs caspase-8 proteolytic activation which initiates the subsequent cascade of caspases (aspartate-specific cysteine proteases) mediating apoptosis. Promotes the activation of NF-kappa-B. Essential for ER stress-induced apoptosis. In Mus musculus (Mouse), this protein is Tumor necrosis factor receptor superfamily member 10B (Tnfrsf10b).